Reading from the N-terminus, the 392-residue chain is Phosphoglycerate kinase (392 aa).

Residues 21–23 (DFN), Arg36, 59–62 (HLGR), Arg118, and Arg151 each bind substrate. ATP is bound by residues Lys201, Gly292, Glu323, and 349-352 (GGDS).

It belongs to the phosphoglycerate kinase family. Monomer.

It localises to the cytoplasm. The catalysed reaction is (2R)-3-phosphoglycerate + ATP = (2R)-3-phospho-glyceroyl phosphate + ADP. It functions in the pathway carbohydrate degradation; glycolysis; pyruvate from D-glyceraldehyde 3-phosphate: step 2/5. The sequence is that of Phosphoglycerate kinase from Borrelia hermsii (strain HS1 / DAH).